The chain runs to 203 residues: Dephospho-CoA kinase (203 aa).

The DPCK domain maps to 4 to 201; that stretch reads IIGLTGGIGS…RKYLMLARKH (198 aa). Residue 12–17 coordinates ATP; that stretch reads GSGKTR.

It belongs to the CoaE family.

The protein localises to the cytoplasm. The enzyme catalyses 3'-dephospho-CoA + ATP = ADP + CoA + H(+). The protein operates within cofactor biosynthesis; coenzyme A biosynthesis; CoA from (R)-pantothenate: step 5/5. Its function is as follows. Catalyzes the phosphorylation of the 3'-hydroxyl group of dephosphocoenzyme A to form coenzyme A. The chain is Dephospho-CoA kinase from Nitrosomonas europaea (strain ATCC 19718 / CIP 103999 / KCTC 2705 / NBRC 14298).